The sequence spans 452 residues: Pup--protein ligase (452 aa).

Residue Glu-9 coordinates Mg(2+). Arg-53 is an ATP binding site. Position 55 (Tyr-55) interacts with Mg(2+). The Proton acceptor role is filled by Asp-57. Glu-63 contacts Mg(2+). ATP is bound by residues Thr-66 and Trp-419.

It belongs to the Pup ligase/Pup deamidase family. Pup-conjugating enzyme subfamily.

The catalysed reaction is ATP + [prokaryotic ubiquitin-like protein]-L-glutamate + [protein]-L-lysine = ADP + phosphate + N(6)-([prokaryotic ubiquitin-like protein]-gamma-L-glutamyl)-[protein]-L-lysine.. It participates in protein degradation; proteasomal Pup-dependent pathway. The protein operates within protein modification; protein pupylation. In terms of biological role, catalyzes the covalent attachment of the prokaryotic ubiquitin-like protein modifier Pup to the proteasomal substrate proteins, thereby targeting them for proteasomal degradation. This tagging system is termed pupylation. The ligation reaction involves the side-chain carboxylate of the C-terminal glutamate of Pup and the side-chain amino group of a substrate lysine. The protein is Pup--protein ligase of Mycolicibacterium vanbaalenii (strain DSM 7251 / JCM 13017 / BCRC 16820 / KCTC 9966 / NRRL B-24157 / PYR-1) (Mycobacterium vanbaalenii).